We begin with the raw amino-acid sequence, 459 residues long: Bifunctional protein GlmU (459 aa).

The tract at residues Met-1–Arg-230 is pyrophosphorylase. UDP-N-acetyl-alpha-D-glucosamine is bound by residues Leu-9 to Gly-12, Lys-23, Gln-73, and Gly-78 to Thr-79. Asp-103 contributes to the Mg(2+) binding site. Residues Gly-140, Glu-155, Asn-170, and Asn-228 each contribute to the UDP-N-acetyl-alpha-D-glucosamine site. Mg(2+) is bound at residue Asn-228. A linker region spans residues Ile-231–Asn-251. An N-acetyltransferase region spans residues Gly-252–Ser-459. Positions 333 and 351 each coordinate UDP-N-acetyl-alpha-D-glucosamine. The Proton acceptor role is filled by His-363. 2 residues coordinate UDP-N-acetyl-alpha-D-glucosamine: Tyr-366 and Asn-377. Acetyl-CoA is bound by residues Asn-386–Tyr-387, Ala-423, and Arg-440.

It in the N-terminal section; belongs to the N-acetylglucosamine-1-phosphate uridyltransferase family. In the C-terminal section; belongs to the transferase hexapeptide repeat family. Homotrimer. The cofactor is Mg(2+).

It is found in the cytoplasm. The enzyme catalyses alpha-D-glucosamine 1-phosphate + acetyl-CoA = N-acetyl-alpha-D-glucosamine 1-phosphate + CoA + H(+). It catalyses the reaction N-acetyl-alpha-D-glucosamine 1-phosphate + UTP + H(+) = UDP-N-acetyl-alpha-D-glucosamine + diphosphate. The protein operates within nucleotide-sugar biosynthesis; UDP-N-acetyl-alpha-D-glucosamine biosynthesis; N-acetyl-alpha-D-glucosamine 1-phosphate from alpha-D-glucosamine 6-phosphate (route II): step 2/2. It functions in the pathway nucleotide-sugar biosynthesis; UDP-N-acetyl-alpha-D-glucosamine biosynthesis; UDP-N-acetyl-alpha-D-glucosamine from N-acetyl-alpha-D-glucosamine 1-phosphate: step 1/1. Its pathway is bacterial outer membrane biogenesis; LPS lipid A biosynthesis. Its function is as follows. Catalyzes the last two sequential reactions in the de novo biosynthetic pathway for UDP-N-acetylglucosamine (UDP-GlcNAc). The C-terminal domain catalyzes the transfer of acetyl group from acetyl coenzyme A to glucosamine-1-phosphate (GlcN-1-P) to produce N-acetylglucosamine-1-phosphate (GlcNAc-1-P), which is converted into UDP-GlcNAc by the transfer of uridine 5-monophosphate (from uridine 5-triphosphate), a reaction catalyzed by the N-terminal domain. The polypeptide is Bifunctional protein GlmU (Geobacillus thermodenitrificans (strain NG80-2)).